The following is a 320-amino-acid chain: HPr kinase/phosphorylase (320 aa).

Residues His-141 and Lys-162 contribute to the active site. Position 156 to 163 (156 to 163) interacts with ATP; that stretch reads GHSGLGKS. A Mg(2+)-binding site is contributed by Ser-163. The Proton acceptor; for phosphorylation activity. Proton donor; for dephosphorylation activity role is filled by Asp-180. The segment at 204–213 is important for the catalytic mechanism of both phosphorylation and dephosphorylation; that stretch reads LEVRGLGILN. Glu-205 lines the Mg(2+) pocket. Residue Arg-248 is part of the active site. The interval 269–274 is important for the catalytic mechanism of dephosphorylation; it reads PVAVGR.

This sequence belongs to the HPrK/P family. Homohexamer. It depends on Mg(2+) as a cofactor.

The catalysed reaction is [HPr protein]-L-serine + ATP = [HPr protein]-O-phospho-L-serine + ADP + H(+). It catalyses the reaction [HPr protein]-O-phospho-L-serine + phosphate + H(+) = [HPr protein]-L-serine + diphosphate. In terms of biological role, catalyzes the ATP- as well as the pyrophosphate-dependent phosphorylation of a specific serine residue in HPr, a phosphocarrier protein of the phosphoenolpyruvate-dependent sugar phosphotransferase system (PTS). HprK/P also catalyzes the pyrophosphate-producing, inorganic phosphate-dependent dephosphorylation (phosphorolysis) of seryl-phosphorylated HPr (P-Ser-HPr). This chain is HPr kinase/phosphorylase, found in Neisseria meningitidis serogroup B (strain ATCC BAA-335 / MC58).